The primary structure comprises 644 residues: MFQDNPLLAQLKQQLHSQTPRAEGVVKATEKGFGFLEVDAQKSYFIPPPQMKKVMHGDRIIAVIHSEKERESAEPEELVEPFLTRFVGKVQGKNDRLAIVPDHPLLKDAIPCRAARGLNHEFKEGDWAVAEMRRHPLKGDRSFYAELTQYITFGDDHFVPWWVTLARHNLEKEAPDGVATEMLDEGLVREDLTALDFVTIDSASTEDMDDALFAKALPDGKLQLIVAIADPTAWIAEGSKLDKAAKIRAFTNYLPGFNIPMLPRELSDDLCSLRANEVRPVLACRMTFSTDGTIEDNIEFFAATIESKAKLVYDQVSDWLENTGDWQPESEAIAEQVRLLAQICQRRGEWRHNHALVFKDRLDYRFILGEKGEVLDIVAEPRRIANRIVEEAMIAANICAARVLRDKLGFGIYNVHMGFDPANADALAALLKTHGLHVDAEEVLTLDGFCKLRRELDAQPTGFLDSRIRRFQSFAEISTEPGPHFGLGLEAYATWTSPIRKYGDMINHRLLKAVIKGETATRPQDEITVQMAERRRLNRMAERDVGDWLYARFLKDKAGTDTRFAAEIVDISRGGMRVRLVDNGAIAFIPAPFLHAVRDELVCSQENGTVQIKGETAYKVTDVIDVTIAEVRMETRSIIARPVA.

In terms of domain architecture, RNB spans Arg189–Lys516. An S1 motif domain is found at Asp561–Val643.

The protein belongs to the RNR ribonuclease family. RNase II subfamily.

The protein localises to the cytoplasm. The enzyme catalyses Exonucleolytic cleavage in the 3'- to 5'-direction to yield nucleoside 5'-phosphates.. Functionally, involved in mRNA degradation. Hydrolyzes single-stranded polyribonucleotides processively in the 3' to 5' direction. This chain is Exoribonuclease 2, found in Escherichia coli (strain UTI89 / UPEC).